The primary structure comprises 316 residues: ATP synthase gamma chain (316 aa).

Belongs to the ATPase gamma chain family. F-type ATPases have 2 components, CF(1) - the catalytic core - and CF(0) - the membrane proton channel. CF(1) has five subunits: alpha(3), beta(3), gamma(1), delta(1), epsilon(1). CF(0) has three main subunits: a, b and c.

The protein localises to the cellular thylakoid membrane. Functionally, produces ATP from ADP in the presence of a proton gradient across the membrane. The gamma chain is believed to be important in regulating ATPase activity and the flow of protons through the CF(0) complex. In Prochlorococcus marinus (strain SARG / CCMP1375 / SS120), this protein is ATP synthase gamma chain.